The sequence spans 321 residues: Phosphatidate cytidylyltransferase, mitochondrial (321 aa).

It belongs to the TAM41 family. It depends on Mg(2+) as a cofactor. Co(2+) is required as a cofactor. Requires Cu(2+) as cofactor.

It localises to the mitochondrion inner membrane. It carries out the reaction a 1,2-diacyl-sn-glycero-3-phosphate + CTP + H(+) = a CDP-1,2-diacyl-sn-glycerol + diphosphate. The protein operates within phospholipid metabolism; CDP-diacylglycerol biosynthesis; CDP-diacylglycerol from sn-glycerol 3-phosphate: step 3/3. In terms of biological role, catalyzes the formation of CDP-diacylglycerol (CDP-DAG) from phosphatidic acid (PA) in the mitochondrial inner membrane. Required for the biosynthesis of the dimeric phospholipid cardiolipin, which stabilizes supercomplexes of the mitochondrial respiratory chain in the mitochondrial inner membrane. This is Phosphatidate cytidylyltransferase, mitochondrial from Caenorhabditis briggsae.